Here is a 401-residue protein sequence, read N- to C-terminus: Calcium-responsive transcription coactivator (401 aa).

An N-terminal auto-inhibitory domain; necessary for interaction with SMARCA4/BRG1 region spans residues 1 to 148; that stretch reads MSVAFASARP…TLPTTSMSMS (148 aa). An SH2-binding motif is present at residues 50-53; sequence YQQI. Disordered stretches follow at residues 72 to 171 and 214 to 401; these read QSLL…VPMQ and TRAR…NYQQ. The segment covering 85-106 has biased composition (low complexity); sequence LGPGALSQSGSSQGLHPQGSLS. Positions 128–137 are enriched in polar residues; that stretch reads NHVSMQQTAQ. Positions 138 to 149 are enriched in low complexity; sequence STLPTTSMSMSG. Residues 149 to 237 form a methionine-rich intra-molecular domain region; the sequence is GSGHGTGPGY…GGSMMGQRPM (89 aa). Residues 251-322 are MFD domain; sequence YLGQEEYYSE…SQYSQQQAGY (72 aa). Polar residues-rich tracts occupy residues 260-276 and 285-294; these read EQYS…SQQY and AYQQSSYTEQ. Residues 295-304 show a composition bias toward basic and acidic residues; that stretch reads SYDRSFEDPT. The segment covering 310–374 has biased composition (low complexity); sequence GGNSQYSQQQ…QGQGQQYGSY (65 aa). The segment at 339–401 is necessary for nuclear localization; that stretch reads NQQSYPGQQQ…EQGQYGNYQQ (63 aa). Residues 358-361 carry the SH2-binding motif; sequence SQYS. Residues 375 to 387 show a composition bias toward polar residues; that stretch reads RTSQTGPSAQQQR. Positions 376 to 384 match the SH3-binding motif; sequence TSQTGPSAQ. Over residues 389–401 the composition is skewed to low complexity; it reads YGYEQGQYGNYQQ. Positions 392–401 are necessary for interaction with CREBBP and for the recruitment of CREBBP to the nuclear bodies; that stretch reads EQGQYGNYQQ. Positions 396–399 match the SH2-binding motif; the sequence is YGNY.

This sequence belongs to the SS18 family. In terms of assembly, homodimer. Dimerization may be necessary for its function in neuronal dendritic development. Interacts (via C-terminus) with CREBBP (via N-terminus), EP300 and SMARCA4/BRG1. Interacts with the nBAF complex. Association with CREBBP facilitates transcription while the association with SMARCA4/BRG1 suppresses CREST-mediated transcription in resting neurons. In terms of tissue distribution, brain (at protein level). Also found in the heart, liver, kidney and testis.

The protein localises to the nucleus. The protein resides in the chromosome. It localises to the centromere. It is found in the kinetochore. Its function is as follows. Transcriptional activator which is required for calcium-dependent dendritic growth and branching in cortical neurons. Recruits CREB-binding protein (CREBBP) to nuclear bodies. Component of the CREST-BRG1 complex, a multiprotein complex that regulates promoter activation by orchestrating a calcium-dependent release of a repressor complex and a recruitment of an activator complex. In resting neurons, transcription of the c-FOS promoter is inhibited by BRG1-dependent recruitment of a phospho-RB1-HDAC1 repressor complex. Upon calcium influx, RB1 is dephosphorylated by calcineurin, which leads to release of the repressor complex. At the same time, there is increased recruitment of CREBBP to the promoter by a CREST-dependent mechanism, which leads to transcriptional activation. The CREST-BRG1 complex also binds to the NR2B promoter, and activity-dependent induction of NR2B expression involves a release of HDAC1 and recruitment of CREBBP. This chain is Calcium-responsive transcription coactivator (Ss18l1), found in Rattus norvegicus (Rat).